Reading from the N-terminus, the 728-residue chain is Putative auxin response factor 20 (728 aa).

The segment at residues 119-233 (FFEKQLSPAD…ELLVGVRRAP (115 aa)) is a DNA-binding region (TF-B3 1). Composition is skewed to low complexity over residues 665-689 (PQGS…TTSA) and 700-712 (ASSS…IIPS). The interval 665-728 (PQGSDEEAAA…IVNPRDGSQG (64 aa)) is disordered.

It belongs to the ARF family. In terms of assembly, homo and heterodimers.

It localises to the nucleus. Auxin response factors (ARFs) are transcriptional factors that bind specifically to the DNA sequence 5'-TGTCTC-3' found in the auxin-responsive promoter elements (AuxREs). In Oryza sativa subsp. japonica (Rice), this protein is Putative auxin response factor 20 (ARF20).